The following is a 322-amino-acid chain: Tyrosine recombinase XerC (322 aa).

A disordered region spans residues 1-25 (MPEAAPPVADARGSSPTATTGPGAD). Low complexity predominate over residues 16–25 (PTATTGPGAD). A Core-binding (CB) domain is found at 25-111 (DATLSAVEPF…ACRSYYAWLL (87 aa)). Residues 132 to 309 (KLPQVLDADE…DFQHLAKVYD (178 aa)) enclose the Tyr recombinase domain. Residues Arg171, Lys195, His261, Arg264, and His287 contribute to the active site. The active-site O-(3'-phospho-DNA)-tyrosine intermediate is Tyr296.

It belongs to the 'phage' integrase family. XerC subfamily. In terms of assembly, forms a cyclic heterotetrameric complex composed of two molecules of XerC and two molecules of XerD.

It is found in the cytoplasm. Site-specific tyrosine recombinase, which acts by catalyzing the cutting and rejoining of the recombining DNA molecules. The XerC-XerD complex is essential to convert dimers of the bacterial chromosome into monomers to permit their segregation at cell division. It also contributes to the segregational stability of plasmids. This chain is Tyrosine recombinase XerC, found in Xanthomonas campestris pv. campestris (strain 8004).